A 203-amino-acid polypeptide reads, in one-letter code: Orotate phosphoribosyltransferase (203 aa).

Residues arginine 94, lysine 98, histidine 100, and 120-128 contribute to the 5-phospho-alpha-D-ribose 1-diphosphate site; that span reads EDLISTGGS. Serine 124 is an orotate binding site.

It belongs to the purine/pyrimidine phosphoribosyltransferase family. PyrE subfamily. Homodimer. Mg(2+) serves as cofactor.

The enzyme catalyses orotidine 5'-phosphate + diphosphate = orotate + 5-phospho-alpha-D-ribose 1-diphosphate. It participates in pyrimidine metabolism; UMP biosynthesis via de novo pathway; UMP from orotate: step 1/2. Catalyzes the transfer of a ribosyl phosphate group from 5-phosphoribose 1-diphosphate to orotate, leading to the formation of orotidine monophosphate (OMP). The sequence is that of Orotate phosphoribosyltransferase from Staphylococcus aureus (strain Mu50 / ATCC 700699).